The sequence spans 95 residues: Small ribosomal subunit protein bS16 (95 aa).

Belongs to the bacterial ribosomal protein bS16 family.

This Roseiflexus sp. (strain RS-1) protein is Small ribosomal subunit protein bS16.